The chain runs to 156 residues: Small ribosomal subunit protein uS7 (156 aa).

Belongs to the universal ribosomal protein uS7 family. As to quaternary structure, part of the 30S ribosomal subunit. Contacts proteins S9 and S11.

Functionally, one of the primary rRNA binding proteins, it binds directly to 16S rRNA where it nucleates assembly of the head domain of the 30S subunit. Is located at the subunit interface close to the decoding center, probably blocks exit of the E-site tRNA. The polypeptide is Small ribosomal subunit protein uS7 (Clostridium tetani (strain Massachusetts / E88)).